The sequence spans 368 residues: tRNA-specific 2-thiouridylase MnmA (368 aa).

Residues 10-17 and Met-36 contribute to the ATP site; that span reads AMSGGVDS. Cys-108 acts as the Nucleophile in catalysis. A disulfide bridge connects residues Cys-108 and Cys-206. Gly-132 is an ATP binding site. The tract at residues 156 to 158 is interaction with tRNA; it reads KDQ. Cys-206 (cysteine persulfide intermediate) is an active-site residue. Residues 312–313 form an interaction with tRNA region; the sequence is RY.

It belongs to the MnmA/TRMU family.

Its subcellular location is the cytoplasm. The enzyme catalyses S-sulfanyl-L-cysteinyl-[protein] + uridine(34) in tRNA + AH2 + ATP = 2-thiouridine(34) in tRNA + L-cysteinyl-[protein] + A + AMP + diphosphate + H(+). Functionally, catalyzes the 2-thiolation of uridine at the wobble position (U34) of tRNA, leading to the formation of s(2)U34. In Natranaerobius thermophilus (strain ATCC BAA-1301 / DSM 18059 / JW/NM-WN-LF), this protein is tRNA-specific 2-thiouridylase MnmA.